The chain runs to 400 residues: GDNF family receptor alpha-3 (400 aa).

The N-terminal stretch at 1-31 is a signal peptide; the sequence is MVRPLNPRPLPPVVLMLLLLLPPSPLPLAAG. Residues Cys51 and Cys57 are joined by a disulfide bond. N-linked (GlcNAc...) asparagine glycans are attached at residues Asn95 and Asn148. Cystine bridges form between Cys162/Cys218, Cys169/Cys175, Cys186/Cys196, Cys191/Cys239, Cys220/Cys227, Cys248/Cys316, Cys255/Cys261, Cys272/Cys288, Cys281/Cys340, and Cys318/Cys328. Asn309 carries an N-linked (GlcNAc...) asparagine glycan. Asn374 carries GPI-anchor amidated asparagine lipidation. A propeptide spans 375 to 400 (removed in mature form); it reads PAVRPQPWVPSLFSCTLPLILLLSLW.

Belongs to the GDNFR family. Interacts with ARTN ligand and RET: forms a 2:2:2 ternary complex composed of ARTN ligand, GFRA3 and RET receptor. Interacts with SORL1. In terms of processing, N-glycosylated. As to expression, widely expressed in adult and fetus which exhibit a similar pattern. Essentially not expressed in the central nervous system, but highly expressed in several sensory and sympathetic ganglia of the peripheral nervous system. Moderate expression in many non-neuronal tissues, particularly those of the digestive and urogenital systems, but high expression in stomach and appendix. Several types of glandular tissues show low expression. Very low or no expression detected in the hematopoietic system.

It localises to the cell membrane. Functionally, receptor for artemin (ARTN), a growth factor that supports the survival of sensory and sympathetic peripheral neurons. ARTN-binding leads to autophosphorylation and activation of the RET receptor. This chain is GDNF family receptor alpha-3 (GFRA3), found in Homo sapiens (Human).